The sequence spans 229 residues: 7-cyano-7-deazaguanine synthase (229 aa).

ATP is bound at residue 9–19 (LSGGLDSTTVL). Zn(2+)-binding residues include C192, C202, C205, and C208.

Belongs to the QueC family. Zn(2+) serves as cofactor.

It catalyses the reaction 7-carboxy-7-deazaguanine + NH4(+) + ATP = 7-cyano-7-deazaguanine + ADP + phosphate + H2O + H(+). It participates in purine metabolism; 7-cyano-7-deazaguanine biosynthesis. Its function is as follows. Catalyzes the ATP-dependent conversion of 7-carboxy-7-deazaguanine (CDG) to 7-cyano-7-deazaguanine (preQ(0)). In Kineococcus radiotolerans (strain ATCC BAA-149 / DSM 14245 / SRS30216), this protein is 7-cyano-7-deazaguanine synthase.